The primary structure comprises 159 residues: 6,7-dimethyl-8-ribityllumazine synthase (159 aa).

5-amino-6-(D-ribitylamino)uracil contacts are provided by residues phenylalanine 23, 61–63 (SFE), and 85–87 (AVI). 90 to 91 (DT) serves as a coordination point for (2S)-2-hydroxy-3-oxobutyl phosphate. Histidine 93 acts as the Proton donor in catalysis. Phenylalanine 118 serves as a coordination point for 5-amino-6-(D-ribitylamino)uracil. Arginine 132 contributes to the (2S)-2-hydroxy-3-oxobutyl phosphate binding site.

The protein belongs to the DMRL synthase family.

The catalysed reaction is (2S)-2-hydroxy-3-oxobutyl phosphate + 5-amino-6-(D-ribitylamino)uracil = 6,7-dimethyl-8-(1-D-ribityl)lumazine + phosphate + 2 H2O + H(+). It functions in the pathway cofactor biosynthesis; riboflavin biosynthesis; riboflavin from 2-hydroxy-3-oxobutyl phosphate and 5-amino-6-(D-ribitylamino)uracil: step 1/2. Functionally, catalyzes the formation of 6,7-dimethyl-8-ribityllumazine by condensation of 5-amino-6-(D-ribitylamino)uracil with 3,4-dihydroxy-2-butanone 4-phosphate. This is the penultimate step in the biosynthesis of riboflavin. The chain is 6,7-dimethyl-8-ribityllumazine synthase from Synechococcus sp. (strain RCC307).